Reading from the N-terminus, the 62-residue chain is uncharacterized protein (62 aa).

Residues I17–I37 traverse the membrane as a helical segment.

It is found in the membrane. This is an uncharacterized protein from Helicobacter pylori (strain J99 / ATCC 700824) (Campylobacter pylori J99).